We begin with the raw amino-acid sequence, 108 residues long: uncharacterized protein (108 aa).

A helical membrane pass occupies residues 25–45 (VILKSFLLISSWVILVLLLVI).

The protein localises to the membrane. This is an uncharacterized protein from Saccharomyces cerevisiae (strain ATCC 204508 / S288c) (Baker's yeast).